We begin with the raw amino-acid sequence, 225 residues long: Small ribosomal subunit protein uS7 (225 aa).

This sequence belongs to the universal ribosomal protein uS7 family. As to quaternary structure, component of the small ribosomal subunit. Mature ribosomes consist of a small (40S) and a large (60S) subunit. The 40S subunit contains about 32 different proteins and 1 molecule of RNA (18S). The 60S subunit contains 45 different proteins and 3 molecules of RNA (25S, 5.8S and 5S).

It localises to the cytoplasm. Component of the ribosome, a large ribonucleoprotein complex responsible for the synthesis of proteins in the cell. The small ribosomal subunit (SSU) binds messenger RNAs (mRNAs) and translates the encoded message by selecting cognate aminoacyl-transfer RNA (tRNA) molecules. The large subunit (LSU) contains the ribosomal catalytic site termed the peptidyl transferase center (PTC), which catalyzes the formation of peptide bonds, thereby polymerizing the amino acids delivered by tRNAs into a polypeptide chain. The nascent polypeptides leave the ribosome through a tunnel in the LSU and interact with protein factors that function in enzymatic processing, targeting, and the membrane insertion of nascent chains at the exit of the ribosomal tunnel. The polypeptide is Small ribosomal subunit protein uS7 (RPS5) (Candida albicans (strain SC5314 / ATCC MYA-2876) (Yeast)).